A 428-amino-acid polypeptide reads, in one-letter code: Glucose-1-phosphate adenylyltransferase (428 aa).

Residues Tyr114, Gly179, 194-195 (EK), and Ser212 contribute to the alpha-D-glucose 1-phosphate site.

This sequence belongs to the bacterial/plant glucose-1-phosphate adenylyltransferase family. As to quaternary structure, homotetramer.

It catalyses the reaction alpha-D-glucose 1-phosphate + ATP + H(+) = ADP-alpha-D-glucose + diphosphate. Its pathway is glycan biosynthesis; glycogen biosynthesis. Functionally, involved in the biosynthesis of ADP-glucose, a building block required for the elongation reactions to produce glycogen. Catalyzes the reaction between ATP and alpha-D-glucose 1-phosphate (G1P) to produce pyrophosphate and ADP-Glc. This Yersinia pseudotuberculosis serotype O:1b (strain IP 31758) protein is Glucose-1-phosphate adenylyltransferase.